The following is a 148-amino-acid chain: Large ribosomal subunit protein uL13 (148 aa).

The protein belongs to the universal ribosomal protein uL13 family. As to quaternary structure, part of the 50S ribosomal subunit.

Its function is as follows. This protein is one of the early assembly proteins of the 50S ribosomal subunit, although it is not seen to bind rRNA by itself. It is important during the early stages of 50S assembly. This is Large ribosomal subunit protein uL13 from Sulfolobus acidocaldarius (strain ATCC 33909 / DSM 639 / JCM 8929 / NBRC 15157 / NCIMB 11770).